A 245-amino-acid polypeptide reads, in one-letter code: Terpene cyclase ausL (245 aa).

Helical transmembrane passes span 17–37, 51–71, 76–96, 113–133, 138–158, 170–190, and 206–226; these read ILAI…VNYI, IGIL…WMFP, HWQG…LVTL, IVFI…ALAA, ALGF…GGIA, SYLI…KLCI, and MCWF…FLYF.

This sequence belongs to the paxB family.

The protein resides in the membrane. It participates in secondary metabolite biosynthesis; terpenoid biosynthesis. Its function is as follows. Terpene cyclase; part of the gene cluster A that mediates the biosynthesis of the fungal meroterpenoid acetoxydehydroaustin. The first step of the pathway is the synthesis of 3,5-dimethylorsellinic acid by the polyketide synthase ausA. 3,5-dimethylorsellinic acid is then prenylated by the polyprenyl transferase ausN. Further epoxidation by the FAD-dependent monooxygenase ausM and cyclization by the probable terpene cyclase ausL lead to the formation of protoaustinoid A. Protoaustinoid A is then oxidized to spiro-lactone preaustinoid A3 by the combined action of the FAD-binding monooxygenases ausB and ausC, and the dioxygenase ausE. Acid-catalyzed keto-rearrangement and ring contraction of the tetraketide portion of preaustinoid A3 by ausJ lead to the formation of preaustinoid A4. The aldo-keto reductase ausK, with the help of ausH, is involved in the next step by transforming preaustinoid A4 into isoaustinone which is in turn hydroxylated by the P450 monooxygenase ausI to form austinolide. The cytochrome P450 monooxygenase ausG then modifies austinolide to austinol. Austinol is further acetylated to austin by the O-acetyltransferase ausP, which spontaneously changes to dehydroaustin. The cytochrome P450 monooxygenase then converts dehydroaustin is into 7-dehydrodehydroaustin. The hydroxylation catalyzed by ausR permits the second O-acetyltransferase ausQ to add an additional acetyl group to the molecule, leading to the formation of acetoxydehydroaustin. Due to genetic rearrangements of the clusters and the subsequent loss of some enzymes, the end product of the Penicillium brasilianum austinoid biosynthesis clusters is acetoxydehydroaustin. In Penicillium brasilianum, this protein is Terpene cyclase ausL.